The chain runs to 491 residues: Mitochondrial MYO2 receptor-related protein 1 (491 aa).

Thr-12 bears the Phosphothreonine mark. A phosphoserine mark is found at Ser-16 and Ser-37. A coiled-coil region spans residues 295–384 (NAEEANSREK…CKKVLKKLTE (90 aa)). The interval 300–439 (NSREKSNLDI…GTSSEEDHLT (140 aa)) is interaction with MYO2. The segment at 419–491 (KKIEEQPDSS…LPVQVEKKEK (73 aa)) is disordered. Residues 461–472 (SAISTTASVQSG) show a composition bias toward polar residues.

As to quaternary structure, interacts with MYO2 and PCL7. Phosphorylated by the cyclin-CDK PCL7-PHO85.

Its subcellular location is the bud tip. It is found in the bud neck. It localises to the mitochondrion outer membrane. Involved in the guiding of mitochondrial tubules to the bud tip during cell division. The sequence is that of Mitochondrial MYO2 receptor-related protein 1 (MMR1) from Saccharomyces cerevisiae (strain ATCC 204508 / S288c) (Baker's yeast).